The primary structure comprises 578 residues: Trehalase (578 aa).

A signal peptide spans methionine 1–glycine 19. Residue asparagine 78 is glycosylated (N-linked (GlcNAc...) asparagine). Substrate is bound by residues arginine 168, tryptophan 175 to aspartate 176, asparagine 212, and arginine 221 to glutamine 223. The N-linked (GlcNAc...) asparagine glycan is linked to asparagine 261. Residues arginine 286–glutamate 288 and glycine 319 contribute to the substrate site. Aspartate 321 acts as the Proton donor/acceptor in catalysis. The N-linked (GlcNAc...) asparagine glycan is linked to asparagine 369. Glutamate 514 (proton donor/acceptor) is an active-site residue. A substrate-binding site is contributed by glutamate 528. Residue serine 555 is the site of GPI-anchor amidated serine attachment. Residues glycine 556–arginine 578 constitute a propeptide, removed in mature form.

The protein belongs to the glycosyl hydrolase 37 family. Homodimer; disulfide-linked. In terms of tissue distribution, expressed in small intestine, kidney, and to a lesser extent in liver.

The protein resides in the cell membrane. The catalysed reaction is alpha,alpha-trehalose + H2O = alpha-D-glucose + beta-D-glucose. Its function is as follows. Intestinal trehalase is probably involved in the hydrolysis of ingested trehalose. The polypeptide is Trehalase (TREH) (Oryctolagus cuniculus (Rabbit)).